We begin with the raw amino-acid sequence, 447 residues long: MFDYHQPDPTGHFGIYGGSFVSETLTHAINELKDAYAKYQNDPEFLAEFHSELAHFVGRPSPIYHAARMSREQGGAQIYLKREDLNHTGAHKINNTIGQAMLARRMGKTRIIAETGAGQHGVATATICARYGLECVVYMGSEDVKRQSPNVYRMKLLGATVVPVESGSKTLKDALNEAMRDWVANVDNTFYIIGTVAGPHPYPMMVRDFQSVIGTECLAQMPEFIGNRQPDAVIACVGGGSNAMGIFYPYIAHEETRLIGVEAAGEGLESGKHSASLQRGLPGVLHGNRTYVLQNDDGQVTETHSISAGLDYPGVGPEHAFLKDIGRAEYVGITDTEALEAFHYLCRTEGIIAALESSHAVAYAMKLAKTMRSDQSILVNLSGRGDKDIGTVADLSGADFYDRPSMRGLAVKGGEQPKEFSDGPPLGKLAPSGGSAVREATSVGARK.

Position 92 is an N6-(pyridoxal phosphate)lysine (lysine 92). The tract at residues 408-447 (GLAVKGGEQPKEFSDGPPLGKLAPSGGSAVREATSVGARK) is disordered.

This sequence belongs to the TrpB family. As to quaternary structure, tetramer of two alpha and two beta chains. The cofactor is pyridoxal 5'-phosphate.

The catalysed reaction is (1S,2R)-1-C-(indol-3-yl)glycerol 3-phosphate + L-serine = D-glyceraldehyde 3-phosphate + L-tryptophan + H2O. It participates in amino-acid biosynthesis; L-tryptophan biosynthesis; L-tryptophan from chorismate: step 5/5. The beta subunit is responsible for the synthesis of L-tryptophan from indole and L-serine. The protein is Tryptophan synthase beta chain of Polaromonas sp. (strain JS666 / ATCC BAA-500).